The sequence spans 291 residues: Protease HtpX (291 aa).

Transmembrane regions (helical) follow at residues Ile4–Ile24 and Leu36–Met56. Position 143 (His143) interacts with Zn(2+). Glu144 is an active-site residue. His147 is a Zn(2+) binding site. The next 2 membrane-spanning stretches (helical) occupy residues Gly151–Ser171 and Phe199–Trp219. Glu225 contributes to the Zn(2+) binding site.

Belongs to the peptidase M48B family. The cofactor is Zn(2+).

It is found in the cell inner membrane. The sequence is that of Protease HtpX from Aliivibrio fischeri (strain MJ11) (Vibrio fischeri).